We begin with the raw amino-acid sequence, 45 residues long: MSQAPMATTPRNYPIFTVRWLALHTLGIPTVFFLGALAAMQFIRR.

A helical membrane pass occupies residues 20-36 (WLALHTLGIPTVFFLGA). H24 provides a ligand contact to heme.

Belongs to the PsbE/PsbF family. As to quaternary structure, heterodimer of an alpha subunit and a beta subunit. PSII is composed of 1 copy each of membrane proteins PsbA, PsbB, PsbC, PsbD, PsbE, PsbF, PsbH, PsbI, PsbJ, PsbK, PsbL, PsbM, PsbT, PsbX, PsbY, PsbZ, Psb30/Ycf12, peripheral proteins PsbO, CyanoQ (PsbQ), PsbU, PsbV and a large number of cofactors. It forms dimeric complexes. The cofactor is heme b.

It localises to the cellular thylakoid membrane. Functionally, this b-type cytochrome is tightly associated with the reaction center of photosystem II (PSII). PSII is a light-driven water:plastoquinone oxidoreductase that uses light energy to abstract electrons from H(2)O, generating O(2) and a proton gradient subsequently used for ATP formation. It consists of a core antenna complex that captures photons, and an electron transfer chain that converts photonic excitation into a charge separation. In Synechococcus sp. (strain CC9902), this protein is Cytochrome b559 subunit beta.